Here is a 185-residue protein sequence, read N- to C-terminus: Large ribosomal subunit protein uL5 (185 aa).

The protein belongs to the universal ribosomal protein uL5 family. Part of the 50S ribosomal subunit; part of the 5S rRNA/L5/L18/L25 subcomplex. Contacts the 5S rRNA and the P site tRNA. Forms a bridge to the 30S subunit in the 70S ribosome.

Its function is as follows. This is one of the proteins that bind and probably mediate the attachment of the 5S RNA into the large ribosomal subunit, where it forms part of the central protuberance. In the 70S ribosome it contacts protein S13 of the 30S subunit (bridge B1b), connecting the 2 subunits; this bridge is implicated in subunit movement. Contacts the P site tRNA; the 5S rRNA and some of its associated proteins might help stabilize positioning of ribosome-bound tRNAs. The protein is Large ribosomal subunit protein uL5 of Streptomyces avermitilis (strain ATCC 31267 / DSM 46492 / JCM 5070 / NBRC 14893 / NCIMB 12804 / NRRL 8165 / MA-4680).